We begin with the raw amino-acid sequence, 357 residues long: uncharacterized protein (357 aa).

Residues 120-145 (SSSTVNHDQPAEQPSDKSTDDSTGYP) form a disordered region.

This is an uncharacterized protein from Caenorhabditis elegans.